Here is a 187-residue protein sequence, read N- to C-terminus: Elongation factor P (187 aa).

Residue Lys34 is modified to N6-(3,6-diaminohexanoyl)-5-hydroxylysine.

It belongs to the elongation factor P family. Post-translationally, may be beta-lysylated on the epsilon-amino group of Lys-34 by the combined action of EpmA and EpmB, and then hydroxylated on the C5 position of the same residue by EpmC (if this protein is present). Lysylation is critical for the stimulatory effect of EF-P on peptide-bond formation. The lysylation moiety may extend toward the peptidyltransferase center and stabilize the terminal 3-CCA end of the tRNA. Hydroxylation of the C5 position on Lys-34 may allow additional potential stabilizing hydrogen-bond interactions with the P-tRNA.

It is found in the cytoplasm. Its pathway is protein biosynthesis; polypeptide chain elongation. In terms of biological role, involved in peptide bond synthesis. Alleviates ribosome stalling that occurs when 3 or more consecutive Pro residues or the sequence PPG is present in a protein, possibly by augmenting the peptidyl transferase activity of the ribosome. Modification of Lys-34 is required for alleviation. In Buchnera aphidicola subsp. Schizaphis graminum (strain Sg), this protein is Elongation factor P.